The chain runs to 107 residues: U1-lycotoxin-Ls1e (107 aa).

The N-terminal stretch at 1 to 20 is a signal peptide; the sequence is MMKVLVVVALLVTLISYSSS. A propeptide spanning residues 21-41 is cleaved from the precursor; it reads EGIDDLEADELLSLMANEQTR. Intrachain disulfides connect C44/C59, C51/C68, C58/C86, and C70/C84.

Belongs to the neurotoxin 19 (CSTX) family. 04 (U1-Lctx) subfamily. In terms of tissue distribution, expressed by the venom gland.

Its subcellular location is the secreted. This is U1-lycotoxin-Ls1e from Lycosa singoriensis (Wolf spider).